The following is a 216-amino-acid chain: Cytidylate kinase (216 aa).

10–18 (GPAGAGKST) contacts ATP.

It belongs to the cytidylate kinase family. Type 1 subfamily.

Its subcellular location is the cytoplasm. It carries out the reaction CMP + ATP = CDP + ADP. It catalyses the reaction dCMP + ATP = dCDP + ADP. This is Cytidylate kinase from Clostridioides difficile (strain 630) (Peptoclostridium difficile).